A 373-amino-acid polypeptide reads, in one-letter code: 3 beta-hydroxysteroid dehydrogenase/Delta 5--&gt;4-isomerase type 1 (373 aa).

Residues 10-15 (GAGGFL), tyrosine 155, and lysine 159 each bind NADP(+). Residue lysine 159 is the Proton donor of the active site. Residues 288-308 (LALMYWIGFLLEVVSFLLSPV) traverse the membrane as a helical segment.

Belongs to the 3-beta-HSD family. Adrenal glands, testes and ovaries.

The protein resides in the endoplasmic reticulum membrane. Its subcellular location is the mitochondrion membrane. It catalyses the reaction a 3beta-hydroxy-Delta(5)-steroid + NAD(+) = a 3-oxo-Delta(5)-steroid + NADH + H(+). The catalysed reaction is pregnenolone + NAD(+) = pregn-5-ene-3,20-dione + NADH + H(+). The enzyme catalyses 3beta-hydroxyandrost-5-en-17-one + NAD(+) = androst-5-ene-3,17-dione + NADH + H(+). It carries out the reaction androst-5-en-3beta,17beta-diol + NAD(+) = 17beta-hydroxy-androst-5-en-3-one + NADH + H(+). It catalyses the reaction a 3beta-hydroxysteroid + NADP(+) = a 3-oxosteroid + NADPH + H(+). The catalysed reaction is 5alpha-androstane-3beta,17beta-diol + NADP(+) = 17beta-hydroxy-5alpha-androstan-3-one + NADPH + H(+). The enzyme catalyses 3beta-hydroxy-5alpha-androstan-17-one + NADP(+) = 5alpha-androstan-3,17-dione + NADPH + H(+). It carries out the reaction a 3-oxo-Delta(5)-steroid = a 3-oxo-Delta(4)-steroid. It catalyses the reaction pregn-5-ene-3,20-dione = progesterone. The catalysed reaction is androst-5-ene-3,17-dione = androst-4-ene-3,17-dione. The enzyme catalyses 17beta-hydroxy-androst-5-en-3-one = testosterone. It carries out the reaction 5alpha-androstane-3beta,17beta-diol + NAD(+) = 17beta-hydroxy-5alpha-androstan-3-one + NADH + H(+). The protein operates within steroid hormone biosynthesis. Its pathway is steroid metabolism. Functionally, a bifunctional enzyme responsible for the oxidation and isomerization of 3beta-hydroxy-Delta(5)-steroid precursors to 3-oxo-Delta(4)-steroids, an essential step in steroid hormone biosynthesis. Specifically catalyzes the conversion of pregnenolone to progesterone, 17alpha-hydroxypregnenolone to 17alpha-hydroxyprogesterone, dehydroepiandrosterone (DHEA) to 4-androstenedione and androstenediol to testosterone. Additionally, catalyzes the interconversion between 3beta-hydroxy and 3-oxo-5alpha-androstane steroids controlling the bioavalability of the active forms. Specifically converts dihydrotestosterone to its inactive form 5alpha-androstanediol, that does not bind androgen receptor/AR. Also converts androstanedione, a precursor of testosterone and estrone, to epiandrosterone. Expected to use NAD(+) as preferred electron donor for the 3beta-hydroxy-steroid dehydrogenase activity and NADPH for the 3-ketosteroid reductase activity. This Macaca mulatta (Rhesus macaque) protein is 3 beta-hydroxysteroid dehydrogenase/Delta 5--&gt;4-isomerase type 1 (HSD3B1).